The following is a 259-amino-acid chain: Thiazole synthase (259 aa).

The active-site Schiff-base intermediate with DXP is the K98. Residues G159, 185–186 (AG), and 207–208 (NS) contribute to the 1-deoxy-D-xylulose 5-phosphate site.

This sequence belongs to the ThiG family. In terms of assembly, homotetramer. Forms heterodimers with either ThiH or ThiS.

The protein resides in the cytoplasm. It catalyses the reaction [ThiS sulfur-carrier protein]-C-terminal-Gly-aminoethanethioate + 2-iminoacetate + 1-deoxy-D-xylulose 5-phosphate = [ThiS sulfur-carrier protein]-C-terminal Gly-Gly + 2-[(2R,5Z)-2-carboxy-4-methylthiazol-5(2H)-ylidene]ethyl phosphate + 2 H2O + H(+). Its pathway is cofactor biosynthesis; thiamine diphosphate biosynthesis. Functionally, catalyzes the rearrangement of 1-deoxy-D-xylulose 5-phosphate (DXP) to produce the thiazole phosphate moiety of thiamine. Sulfur is provided by the thiocarboxylate moiety of the carrier protein ThiS. In vitro, sulfur can be provided by H(2)S. This chain is Thiazole synthase, found in Chlorobium phaeobacteroides (strain BS1).